Here is a 1695-residue protein sequence, read N- to C-terminus: Sialoadhesin (1695 aa).

The signal sequence occupies residues 1–19 (MCVLFSLLLLASVFSLGQT). In terms of domain architecture, Ig-like V-type spans 20–136 (TWGVSSPKNV…DVKGTTVTVT (117 aa)). The Extracellular portion of the chain corresponds to 20-1639 (TWGVSSPKNV…ALHQLQLFQR (1620 aa)). Cystine bridges form between cysteine 36/cysteine 166, cysteine 41/cysteine 98, cysteine 160/cysteine 218, and cysteine 263/cysteine 306. N-acetylneuraminate-binding positions include tyrosine 63, arginine 116, and 122–126 (SNRWL). Ig-like C2-type domains lie at 153–235 (GMER…YLQV), 239–321 (PKGV…SPLS), 326–406 (MAEV…SPLS), 416–508 (PDLT…LDFY), 509–594 (ANVA…TVLT), 602–701 (PTFT…ASFN), 704–781 (ATVL…AQLS), 795–890 (PKLS…FQVR), 894–973 (VQVS…APVS), 980–1079 (PRHV…ADFD), 1081–1161 (QAVR…RPVT), 1172–1264 (RLTY…MNPS), 1245–1337 (KANT…ASLQ), 1342–1439 (PRDA…RLLT), 1442–1520 (DIRV…ATTS), and 1534–1627 (PTLI…AYFG). N-linked (GlcNAc...) asparagine glycosylation occurs at asparagine 159. Residues asparagine 266, asparagine 299, and asparagine 340 are each glycosylated (N-linked (GlcNAc...) asparagine). 2 disulfides stabilise this stretch: cysteine 347/cysteine 391 and cysteine 434/cysteine 492. Asparagine 500 is a glycosylation site (N-linked (GlcNAc...) asparagine). Cysteines 532 and 576 form a disulfide. An N-linked (GlcNAc...) asparagine glycan is attached at asparagine 583. Residues cysteine 625 and cysteine 685 are joined by a disulfide bond. 3 N-linked (GlcNAc...) asparagine glycosylation sites follow: asparagine 693, asparagine 722, and asparagine 737. Disulfide bonds link cysteine 725/cysteine 770 and cysteine 813/cysteine 872. The Cell attachment site signature appears at 827–829 (RGD). N-linked (GlcNAc...) asparagine glycosylation occurs at asparagine 882. Disulfide bonds link cysteine 912–cysteine 956 and cysteine 1001–cysteine 1063. Asparagine 1090 and asparagine 1100 each carry an N-linked (GlcNAc...) asparagine glycan. 2 cysteine pairs are disulfide-bonded: cysteine 1103–cysteine 1145 and cysteine 1189–cysteine 1237. Asparagine 1247 is a glycosylation site (N-linked (GlcNAc...) asparagine). 2 disulfides stabilise this stretch: cysteine 1277–cysteine 1320 and cysteine 1363–cysteine 1422. Residues asparagine 1460 and asparagine 1474 are each glycosylated (N-linked (GlcNAc...) asparagine). 2 disulfides stabilise this stretch: cysteine 1463–cysteine 1509 and cysteine 1552–cysteine 1611. The chain crosses the membrane as a helical span at residues 1640 to 1660 (LLWVLGFLAGFLCLLLGLVAY). Over 1661–1695 (HTWRKKSSTKLNEDENSAEMATKKNTIQEEVVAAL) the chain is Cytoplasmic.

It belongs to the immunoglobulin superfamily. SIGLEC (sialic acid binding Ig-like lectin) family. As to quaternary structure, interacts with CLEC10A. In terms of tissue distribution, detected in lymph node in the subcapsular sinus, interfollicular regions, and T and B-cell boundary (at protein level). Expressed by macrophages in various tissues. Highest expression in spleen and lymph node with lower amounts in lung, liver, bone marrow, heart and skin. No expression in thymus, kidney, brain or small intestine.

Its subcellular location is the cell membrane. It localises to the secreted. Functionally, macrophage-restricted adhesion molecule that mediates sialic-acid dependent binding to lymphocytes, including granulocytes, monocytes, natural killer cells, B-cells and CD8 T-cells. Plays a crucial role in limiting bacterial dissemination by engaging sialylated bacteria to promote effective phagocytosis and antigen presentation for the adaptive immune response. Mediates the uptake of various enveloped viruses via sialic acid recognition and subsequently induces the formation of intracellular compartments filled with virions (VCCs). In turn, enhances macrophage-to-T-cell transmission of several viruses including murine leukemia virus. Acts as an endocytic receptor mediating clathrin dependent endocytosis. Preferentially binds to alpha-2,3-linked sialic acid. Binds to SPN/CD43 on T-cells. May play a role in hemopoiesis. Plays a role in the inhibition of antiviral innate immune by promoting TBK1 degradation via TYROBP and TRIM27-mediated ubiquitination. The chain is Sialoadhesin (Siglec1) from Mus musculus (Mouse).